A 746-amino-acid chain; its full sequence is Double-stranded RNA-specific editase B2 (746 aa).

2 disordered regions span residues 1–36 and 50–105; these read MASVLGSGRGSGGLSSQLKCKSKRRRRRRSKRKDKV and SPGT…PLEE. Positions 20-34 are enriched in basic residues; the sequence is CKSKRRRRRRSKRKD. The interval 23–35 is R-domain (ssRNA-binding); the sequence is KRRRRRRSKRKDK. DRBM domains follow at residues 126–192 and 284–348; these read TPKN…SFVQ and NPVV…ALFD. The A to I editase domain occupies 415 to 742; that stretch reads VLSSGTKCIS…VRKPPEQDQF (328 aa). Residue H439 participates in Zn(2+) binding. The active-site Proton donor is the E441. The Zn(2+) site is built by C497 and C562.

Brain specific.

The protein resides in the nucleus. In terms of biological role, lacks editing activity. It prevents the binding of other ADAR enzymes to targets in vitro, and decreases the efficiency of these enzymes. Capable of binding to dsRNA but also to ssRNA. This is Double-stranded RNA-specific editase B2 (Adarb2) from Rattus norvegicus (Rat).